Consider the following 366-residue polypeptide: DNA integrity scanning protein DisA (366 aa).

In terms of domain architecture, DAC spans 21–159; that stretch reads VHTLKGTLQR…EGKSHMLEQP (139 aa). ATP-binding positions include G88, L106, and 119 to 123; that span reads TRHRS.

It belongs to the DisA family. As to quaternary structure, homooctamer. The cofactor is Mg(2+).

It carries out the reaction 2 ATP = 3',3'-c-di-AMP + 2 diphosphate. Functionally, participates in a DNA-damage check-point. DisA forms globular foci that rapidly scan along the chromosomes searching for lesions. Its function is as follows. Also has diadenylate cyclase activity, catalyzing the condensation of 2 ATP molecules into cyclic di-AMP (c-di-AMP). c-di-AMP likely acts as a signaling molecule that may couple DNA integrity with a cellular process. The polypeptide is DNA integrity scanning protein DisA (Corynebacterium glutamicum (strain ATCC 13032 / DSM 20300 / JCM 1318 / BCRC 11384 / CCUG 27702 / LMG 3730 / NBRC 12168 / NCIMB 10025 / NRRL B-2784 / 534)).